Consider the following 389-residue polypeptide: 23S rRNA (uracil(747)-C(5))-methyltransferase RlmC (389 aa).

4 residues coordinate [4Fe-4S] cluster: C5, C13, C16, and C94. Residues Q219, F248, E275, and N321 each coordinate S-adenosyl-L-methionine. Catalysis depends on C348, which acts as the Nucleophile.

The protein belongs to the class I-like SAM-binding methyltransferase superfamily. RNA M5U methyltransferase family. RlmC subfamily.

It carries out the reaction uridine(747) in 23S rRNA + S-adenosyl-L-methionine = 5-methyluridine(747) in 23S rRNA + S-adenosyl-L-homocysteine + H(+). Catalyzes the formation of 5-methyl-uridine at position 747 (m5U747) in 23S rRNA. This is 23S rRNA (uracil(747)-C(5))-methyltransferase RlmC from Mannheimia succiniciproducens (strain KCTC 0769BP / MBEL55E).